The primary structure comprises 182 residues: Nucleoid-associated protein At2g24020, chloroplastic (182 aa).

Residues Met-1–Arg-48 constitute a chloroplast transit peptide.

This sequence belongs to the YbaB/EbfC family. As to quaternary structure, homodimer. Interacts with ALB3 and ALB4.

The protein resides in the plastid. The protein localises to the chloroplast stroma. In terms of biological role, participates with ALB4 in thylakoid protein targeting. May function with specific subset of thylakoidal proteins. Binds to DNA and alters its conformation. May be involved in regulation of gene expression, nucleoid organization and DNA protection. The polypeptide is Nucleoid-associated protein At2g24020, chloroplastic (Arabidopsis thaliana (Mouse-ear cress)).